The following is a 442-amino-acid chain: Aspartate--tRNA(Asp/Asn) ligase (442 aa).

Glu172 lines the L-aspartate pocket. Positions 194-197 (QFYK) are aspartate. Arg216 is an L-aspartate binding site. ATP is bound by residues 216-218 (RAE), 224-226 (RHL), and Glu365. Residues Glu365 and Thr368 each coordinate Mg(2+). Positions 368 and 372 each coordinate L-aspartate. Residue 413–416 (GLER) participates in ATP binding.

Belongs to the class-II aminoacyl-tRNA synthetase family. Type 2 subfamily. Homodimer. The cofactor is Mg(2+).

Its subcellular location is the cytoplasm. It carries out the reaction tRNA(Asx) + L-aspartate + ATP = L-aspartyl-tRNA(Asx) + AMP + diphosphate. In terms of biological role, aspartyl-tRNA synthetase with relaxed tRNA specificity since it is able to aspartylate not only its cognate tRNA(Asp) but also tRNA(Asn). Reaction proceeds in two steps: L-aspartate is first activated by ATP to form Asp-AMP and then transferred to the acceptor end of tRNA(Asp/Asn). The protein is Aspartate--tRNA(Asp/Asn) ligase (aspS) of Aeropyrum pernix (strain ATCC 700893 / DSM 11879 / JCM 9820 / NBRC 100138 / K1).